The following is a 287-amino-acid chain: ATP synthase gamma chain (287 aa).

This sequence belongs to the ATPase gamma chain family. In terms of assembly, F-type ATPases have 2 components, CF(1) - the catalytic core - and CF(0) - the membrane proton channel. CF(1) has five subunits: alpha(3), beta(3), gamma(1), delta(1), epsilon(1). CF(0) has three main subunits: a, b and c.

It is found in the cell membrane. Produces ATP from ADP in the presence of a proton gradient across the membrane. The gamma chain is believed to be important in regulating ATPase activity and the flow of protons through the CF(0) complex. This is ATP synthase gamma chain from Brevibacillus brevis (strain 47 / JCM 6285 / NBRC 100599).